A 172-amino-acid chain; its full sequence is Phosphopantetheine adenylyltransferase (172 aa).

A substrate-binding site is contributed by T14. ATP contacts are provided by residues 14–15 and H22; that span reads TF. Substrate-binding residues include K46, L78, and R92. ATP contacts are provided by residues 93 to 95, E103, and 128 to 134; these read GMR and WLYISST.

This sequence belongs to the bacterial CoaD family. Homohexamer. Mg(2+) is required as a cofactor.

The protein resides in the cytoplasm. It carries out the reaction (R)-4'-phosphopantetheine + ATP + H(+) = 3'-dephospho-CoA + diphosphate. The protein operates within cofactor biosynthesis; coenzyme A biosynthesis; CoA from (R)-pantothenate: step 4/5. In terms of biological role, reversibly transfers an adenylyl group from ATP to 4'-phosphopantetheine, yielding dephospho-CoA (dPCoA) and pyrophosphate. This chain is Phosphopantetheine adenylyltransferase, found in Solidesulfovibrio magneticus (strain ATCC 700980 / DSM 13731 / RS-1) (Desulfovibrio magneticus).